The sequence spans 381 residues: 40-kDa huntingtin-associated protein (381 aa).

Alanine 2 carries the post-translational modification N-acetylalanine. The Nuclear localization signal signature appears at 34-36 (KKR). Residues 221–265 (QLELLPQPPSGPQPPLSGPQPRPVLGSTLPLPQPPDHAPGSVAPS) are disordered. Pro residues predominate over residues 226-242 (PQPPSGPQPPLSGPQPR).

Interacts with HTT (via C-terminus). Interacts with RAB5A. Found in a complex with F8A1/F8A2/F8A3, HTT and RAB5A; mediates the recruitment of HTT by RAB5A onto early endosomes. In terms of tissue distribution, produced abundantly in a wide variety of cell types.

It is found in the cytoplasm. The protein resides in the nucleus. The protein localises to the early endosome. It localises to the nuclear body. In terms of biological role, RAB5A effector molecule that is involved in vesicular trafficking of early endosomes. Mediates the recruitment of HTT by RAB5A onto early endosomes. The HTT-F8A1/F8A2/F8A3-RAB5A complex stimulates early endosomal interaction with actin filaments and inhibits interaction with microtubules, leading to the reduction of endosome motility. This Mus musculus (Mouse) protein is 40-kDa huntingtin-associated protein (F8a1).